We begin with the raw amino-acid sequence, 197 residues long: Xanthine phosphoribosyltransferase (197 aa).

Positions 20 and 27 each coordinate xanthine. Residue 128–132 coordinates 5-phospho-alpha-D-ribose 1-diphosphate; that stretch reads ANGQA. K156 is a binding site for xanthine.

Belongs to the purine/pyrimidine phosphoribosyltransferase family. Xpt subfamily. As to quaternary structure, homodimer.

It localises to the cytoplasm. It catalyses the reaction XMP + diphosphate = xanthine + 5-phospho-alpha-D-ribose 1-diphosphate. The protein operates within purine metabolism; XMP biosynthesis via salvage pathway; XMP from xanthine: step 1/1. Converts the preformed base xanthine, a product of nucleic acid breakdown, to xanthosine 5'-monophosphate (XMP), so it can be reused for RNA or DNA synthesis. The protein is Xanthine phosphoribosyltransferase of Lactococcus lactis subsp. lactis (strain IL1403) (Streptococcus lactis).